Consider the following 122-residue polypeptide: Large ribosomal subunit protein uL18 (122 aa).

Belongs to the universal ribosomal protein uL18 family. In terms of assembly, part of the 50S ribosomal subunit; part of the 5S rRNA/L5/L18/L25 subcomplex. Contacts the 5S and 23S rRNAs.

Functionally, this is one of the proteins that bind and probably mediate the attachment of the 5S RNA into the large ribosomal subunit, where it forms part of the central protuberance. This is Large ribosomal subunit protein uL18 from Agathobacter rectalis (strain ATCC 33656 / DSM 3377 / JCM 17463 / KCTC 5835 / VPI 0990) (Eubacterium rectale).